A 605-amino-acid chain; its full sequence is Glutamine--fructose-6-phosphate aminotransferase [isomerizing] (605 aa).

Cys-2 acts as the Nucleophile; for GATase activity in catalysis. In terms of domain architecture, Glutamine amidotransferase type-2 spans 2–216 (CGIVGIVGHQ…DGDWAVIGKT (215 aa)). SIS domains are found at residues 280 to 420 (DSDA…ARGT) and 454 to 595 (LSRE…VDQP). Lys-600 serves as the catalytic For Fru-6P isomerization activity.

Its subcellular location is the cytoplasm. It carries out the reaction D-fructose 6-phosphate + L-glutamine = D-glucosamine 6-phosphate + L-glutamate. In terms of biological role, involved in the production of the root hair deformation (HAD) factor specifically on medicago. The polypeptide is Glutamine--fructose-6-phosphate aminotransferase [isomerizing] (nodM) (Rhizobium meliloti (Ensifer meliloti)).